A 323-amino-acid polypeptide reads, in one-letter code: Beta-ketoacyl-[acyl-carrier-protein] synthase III (323 aa).

Active-site residues include cysteine 113 and histidine 250. The interval 251–255 (QANKR) is ACP-binding. Asparagine 280 is an active-site residue.

The protein belongs to the thiolase-like superfamily. FabH family. In terms of assembly, homodimer.

It localises to the cytoplasm. The enzyme catalyses malonyl-[ACP] + acetyl-CoA + H(+) = 3-oxobutanoyl-[ACP] + CO2 + CoA. Its pathway is lipid metabolism; fatty acid biosynthesis. Catalyzes the condensation reaction of fatty acid synthesis by the addition to an acyl acceptor of two carbons from malonyl-ACP. Catalyzes the first condensation reaction which initiates fatty acid synthesis and may therefore play a role in governing the total rate of fatty acid production. Possesses both acetoacetyl-ACP synthase and acetyl transacylase activities. Its substrate specificity determines the biosynthesis of branched-chain and/or straight-chain of fatty acids. In Agrobacterium fabrum (strain C58 / ATCC 33970) (Agrobacterium tumefaciens (strain C58)), this protein is Beta-ketoacyl-[acyl-carrier-protein] synthase III.